A 145-amino-acid polypeptide reads, in one-letter code: Acidic phospholipase A2 homolog textilotoxin C chain (145 aa).

The N-terminal stretch at 1 to 19 is a signal peptide; it reads MHPAHLLVLLGVYVSLLGA. The propeptide occupies 20–27; that stretch reads ARIPPLPL. 7 cysteine pairs are disulfide-bonded: Cys38–Cys98, Cys54–Cys144, Cys56–Cys72, Cys71–Cys125, Cys78–Cys118, Cys87–Cys111, and Cys105–Cys116.

Belongs to the phospholipase A2 family. Group I subfamily. D49 sub-subfamily. In terms of assembly, heterohexamer. 2 forms exist: 2 A or 2 B chains, 2 C chains and 2 covalently-linked D chains, and 1 A or 1 B, 1 C, 2 covalently-linked D chains and 2 differentially glycosylated covalently-linked D chains. Textilotoxin was originally described as pentameric. In terms of tissue distribution, expressed by the venom gland.

The protein resides in the secreted. Snake venom oligomeric phospholipase A2 that has potent presynaptic neurotoxicity. Chain C is not itself neurotoxic, but it is essential for the neurotoxicity of textilotoxin. Chain C possesses a very low phospholipase activity. In Pseudonaja textilis (Eastern brown snake), this protein is Acidic phospholipase A2 homolog textilotoxin C chain.